A 258-amino-acid polypeptide reads, in one-letter code: MASVVSLAGTLGLLLVSALPEVLGDRRSPDRRAHPGDAGQVGPAAAEPRRQSPPSKNQRERARSGALPLGALYTAAAVAFVLYKCLQQGKDEAAVLQEEADKKDSLQSEQHLAQLTQQLVQTEQHLNSLMAQLDPLFERVTTLAGAQQELLHMKLQTIHQLLQDSKPNKGVEVPEPEASIPFLEDFCIEEDEEEAGDNQAWEEPLNWNTGTRNLTPPREMQPTLRRRCRKSAAQGLSHSPHWKEGKTVDGLVKQSLFL.

A signal peptide spans 1–24 (MASVVSLAGTLGLLLVSALPEVLG). The span at 25 to 35 (DRRSPDRRAHP) shows a compositional bias: basic and acidic residues. The interval 25-63 (DRRSPDRRAHPGDAGQVGPAAAEPRRQSPPSKNQRERAR) is disordered. Residues 66–86 (ALPLGALYTAAAVAFVLYKCL) form a helical membrane-spanning segment. Positions 106-134 (LQSEQHLAQLTQQLVQTEQHLNSLMAQLD) form a coiled coil. A disordered region spans residues 203-222 (EPLNWNTGTRNLTPPREMQP).

The protein resides in the membrane. The chain is Coiled-coil domain-containing protein 107 (CCDC107) from Bos taurus (Bovine).